The chain runs to 1832 residues: Zinc finger SWIM domain-containing protein 8 (1832 aa).

Phosphoserine is present on residues S36, S48, and S53. Residues 45-67 (RKQSAGPNSPTGGGGGGGSGGTR) form a disordered region. Gly residues predominate over residues 55–65 (TGGGGGGGSGG). An SWIM-type zinc finger spans residues 172 to 208 (YNVAVMFDRCRVTSCSCTCGAGAKWCTHVVALCLFRI). A phosphoserine mark is found at S437 and S564. Disordered regions lie at residues 516–722 (PGAS…VGEE), 800–821 (NPPD…VSTS), and 1018–1216 (SQTH…TVDV). Positions 563 to 572 (LSAEGGDKAL) are enriched in basic and acidic residues. A compositionally biased stretch (polar residues) spans 1021-1042 (HKPQTLSSFYSSSRPATANQRS). Gly residues predominate over residues 1121 to 1132 (SRGGYNGRGWGS). T1141 is modified (phosphothreonine). Polar residues predominate over residues 1146–1161 (IDSSAPETTSDSSPTL). Residues S1155, S1158, and S1162 each carry the phosphoserine modification. Positions 1176-1211 (GRGQDSDSISSSSSDSLGSSSSSGSRRASASGGARA) are enriched in low complexity. Position 1270 is a phosphoserine (S1270). The segment covering 1435 to 1446 (STAREGATSCSG) has biased composition (polar residues). The disordered stretch occupies residues 1435–1465 (STAREGATSCSGSGMRAAGEAGRGLPEGRGA). A compositionally biased stretch (gly residues) spans 1455–1465 (AGRGLPEGRGA). Phosphoserine is present on S1831.

The protein belongs to the ZSWIM8 family. As to quaternary structure, component of the SCF-like E3 ubiquitin-protein ligase complex which contains CUL3, RBX1, ELOB, ELOC and ZSWIM8. Interacts with DAB1.

It is found in the cytoplasm. The protein localises to the cytosol. It functions in the pathway protein modification; protein ubiquitination. Substrate recognition component of a SCF-like E3 ubiquitin-protein ligase complex that promotes target-directed microRNA degradation (TDMD), a process that mediates degradation of microRNAs (miRNAs). The SCF-like E3 ubiquitin-protein ligase complex acts by catalyzing ubiquitination and subsequent degradation of AGO proteins (AGO1, AGO2, AGO3 and/or AGO4), thereby exposing miRNAs for degradation. Specifically recognizes and binds AGO proteins when they are engaged with a TDMD target. May also acts as a regulator of axon guidance: specifically recognizes misfolded ROBO3 and promotes its ubiquitination and subsequent degradation. Plays an essential role for proper embryonic development of heart and lung. Controls protein quality of DAB1, a key signal molecule for brain development, thus protecting its signaling strength. Mechanistically, recognizes intrinsically disordered regions of DAB1 and eliminates misfolded DAB1 that cannot be properly phosphorylated. This is Zinc finger SWIM domain-containing protein 8 from Mus musculus (Mouse).